The primary structure comprises 213 residues: Ras-related protein Rab-39B (213 aa).

Residues Ser-17, Gly-20, Lys-21, Ser-22, Cys-23, Ser-37, and Thr-40 each contribute to the GTP site. Ser-22 is a Mg(2+) binding site. A switch-I region spans residues Gln-35–Val-43. Mg(2+) contacts are provided by Thr-40 and Asp-64. 6 residues coordinate GTP: Gly-67, His-123, Lys-124, Asp-126, Ala-154, and Arg-155. The switch-II stretch occupies residues Gly-67–Val-83. Ser-201 carries the post-translational modification Phosphoserine. Residues Cys-211 and Cys-213 are each lipidated (S-geranylgeranyl cysteine). Cys-213 bears the Cysteine methyl ester mark.

This sequence belongs to the small GTPase superfamily. Rab family. In terms of assembly, interacts (GDP-bound) with C9orf72; C9orf72 in complex with SMCR8 acts as a GEF for RAB39B. Interacts (in GTP-bound form) with PICK1 (via PDZ domain); a PICK1 homodimer may allow simultaneous association of RAB39B and GRIA2 to PICK1 which is involved in GRIA2 trafficking. Interacts with isoform c of RASSF1; the interaction is strong. Interacts with isoform a of RASSF1; the interaction is weak. Interacts with the DLG4/PSD-95. Interacts (GTP-bound) with HOPS complex components VPS39 and VPS41. It depends on Mg(2+) as a cofactor.

Its subcellular location is the cell membrane. The protein resides in the cytoplasmic vesicle membrane. It localises to the golgi apparatus. It is found in the cytoplasmic vesicle. The protein localises to the autophagosome membrane. Its subcellular location is the autolysosome membrane. The catalysed reaction is GTP + H2O = GDP + phosphate + H(+). Its activity is regulated as follows. Regulated by guanine nucleotide exchange factors (GEFs) including C9orf72-SMCR8 complex, which promote the exchange of bound GDP for free GTP. Regulated by GTPase activating proteins (GAPs) which increase the GTP hydrolysis activity. Inhibited by GDP dissociation inhibitors (GDIs). Functionally, the small GTPases Rab are key regulators of intracellular membrane trafficking, from the formation of transport vesicles to their fusion with membranes. Rabs cycle between an inactive GDP-bound form and an active GTP-bound form that is able to recruit to membranes different sets of downstream effectors directly responsible for vesicle formation, movement, tethering and fusion. RAB39B is involved in autophagy and may function in autophagosome formation. Binds downstream effector PICK1 to ensure selectively GRIA2 exit from the endoplasmic reticulum to the Golgi and to regulate AMPAR composition at the post-synapses and thus synaptic transmission. May regulate the homeostasis of SNCA/alpha-synuclein. The polypeptide is Ras-related protein Rab-39B (RAB39B) (Bos taurus (Bovine)).